A 277-amino-acid chain; its full sequence is MQNETASHGINFDALGRDRQSLDLASESVELEVPGLNLFYGAKQALFDVRMNIPKQRVTAFIGPSGCGKSTLLRCFNRMNDLVDGCRVEGEIRLDGHNIFAKGVDVAELRRRVGMVFQKPNPFPKSIYENVVYGLRIQGINKKRVLDEAVEWALKGAALWEEVKDRLHESALGLSGGQQQRLVIARTIAVEPEVLLLDEPCSALDPISTLKIEELIYELKSKFTIVIVTHNMQQAARVSDYTAFMYMGKLIEFGDTDTLFTNPAKKQTEDYITGRYG.

The region spanning 31 to 272 is the ABC transporter domain; it reads LEVPGLNLFY…PAKKQTEDYI (242 aa). 63 to 70 contributes to the ATP binding site; sequence GPSGCGKS.

The protein belongs to the ABC transporter superfamily. Phosphate importer (TC 3.A.1.7) family. In terms of assembly, the complex is composed of two ATP-binding proteins (PstB), two transmembrane proteins (PstC and PstA) (Potential). PstS is missing in this species.

Its subcellular location is the cell inner membrane. It catalyses the reaction phosphate(out) + ATP + H2O = ADP + 2 phosphate(in) + H(+). In terms of biological role, part of the ABC transporter complex PstSACB involved in phosphate import. Responsible for energy coupling to the transport system. The protein is Phosphate import ATP-binding protein PstB of Pseudomonas aeruginosa (strain ATCC 15692 / DSM 22644 / CIP 104116 / JCM 14847 / LMG 12228 / 1C / PRS 101 / PAO1).